Here is a 337-residue protein sequence, read N- to C-terminus: Hsp90 co-chaperone Cdc37-like 1 (337 aa).

Residues Met1–Trp11 show a composition bias toward pro residues. The tract at residues Met1 to Thr43 is disordered. Positions Glu2–Met171 are self-association. 2 positions are modified to phosphoserine: Ser32 and Ser88. Residues His84–Arg122 are a coiled coil. The tract at residues Lys147–Pro277 is self-association and interaction with Hsp90. The interval Lys267 to Val337 is interaction with Hsp70. The segment at Asn278–Val337 is required for interaction with STIP1.

The protein belongs to the CDC37 family. Self-associates. Forms complexes with Hsp70 and Hsp90. Interacts with CDC37, FKBP4, PPID and STIP1.

It localises to the cytoplasm. Its function is as follows. Co-chaperone that binds to numerous proteins and promotes their interaction with Hsp70 and Hsp90. The protein is Hsp90 co-chaperone Cdc37-like 1 (CDC37L1) of Bos taurus (Bovine).